Consider the following 231-residue polypeptide: NKG2-C type II integral membrane protein (231 aa).

The span at 1–12 (MNKQRGTFSEVS) shows a compositional bias: polar residues. Residues 1–32 (MNKQRGTFSEVSLAQDPKRQQRKPKGNKSSIS) are disordered. The Cytoplasmic segment spans residues 1 to 70 (MNKQRGTFSE…CQGLLPPPEK (70 aa)). Residues 71 to 93 (LTAEVLGIICIVLMATVLKTIVL) traverse the membrane as a helical; Signal-anchor for type II membrane protein segment. Over 94–231 (IPFLEQNNFS…SMIYHCKHKL (138 aa)) the chain is Extracellular. Residue N100 is glycosylated (N-linked (GlcNAc...) asparagine). The C-type lectin domain maps to 116–229 (HCPEEWITYS…GSSMIYHCKH (114 aa)). Intrachain disulfides connect C117-C128, C145-C227, and C206-C219. 2 N-linked (GlcNAc...) asparagine glycosylation sites follow: N149 and N178.

In terms of assembly, heterodimer with KLRD1; disulfide-linked. KLRD1-KLRC2 receptor complex interacts with TYROBP homodimer; this interaction is necessary for the expression on the cell surface. KLRD1-KLRC2 receptor complex can bind with low affinity to HLA-E loaded with self-peptides derived from the signal sequence of classical MHC class Ia. Expressed in NK cell subsets, in particular in adaptive CD57-positive NK cells (at protein level). Expressed in terminally differentiated cytotoxic gamma-delta T cells (at protein level). Expressed in alpha-beta T cells subsets (at protein level). KLRD1-KLRC1 and KLRD1-KLRC2 are differentially expressed within NK and T cell populations, with only minor subsets expressing both receptor complexes (at protein level).

The protein resides in the cell membrane. Immune activating receptor involved in self-nonself discrimination. In complex with KLRD1 on cytotoxic lymphocyte subsets, recognizes non-classical major histocompatibility (MHC) class Ib HLA-E loaded with signal sequence-derived peptides from non-classical MHC class Ib HLA-G molecules, likely playing a role in the generation and effector functions of adaptive natural killer (NK) cells and in maternal-fetal tolerance during pregnancy. Regulates the effector functions of terminally differentiated cytotoxic lymphocyte subsets, and in particular may play a role in adaptive NK cell response to viral infection. Upon HLA-E-peptide binding, transmits intracellular signals via the adapter protein TYROBP/DAP12, triggering the phosphorylation of proximal signaling molecules and cell activation. This is NKG2-C type II integral membrane protein (KLRC2) from Homo sapiens (Human).